The sequence spans 415 residues: MSILETFDPAVANAIRLETERQEYNLELIASENFVSEAVMEAQGSVLTNKYAEGYPGKRYYGGCHNVDIVENLAIERAKELFGAEHANVQPHSGSQANMAVYFTVLKPGDTVLGMNLAHGGHLTHGSPVNFSGKFFNIVPYGVTRENQTIDYDEVERLTLEHKPKMIVVGASAYPRIIDFAAFRKVADKVGAVVMVDMAHIAGLVAAGLHPSPVPHAEFVTTTTHKTLRGPRGGMILCREEFAKALNSNIFPGIQGGPLMHAIAAKAVAFKEALAPEFKTYQEQIVKNAKALAAGLVKQGFKLTSGGTDNHLMLVDLSETQLTGKVAEEALDKAGITVNKNGIPFDTRSPFITSGIRIGTPAATTHGLKEANMEEVAVLIADALANVENETKLAEVKGRVNAMMKRFPLYAHRLA.

(6S)-5,6,7,8-tetrahydrofolate-binding positions include Leu117 and 121-123 (GHL). Lys226 is modified (N6-(pyridoxal phosphate)lysine). (6S)-5,6,7,8-tetrahydrofolate is bound by residues Glu241 and 349 to 351 (SPF).

This sequence belongs to the SHMT family. In terms of assembly, homodimer. Requires pyridoxal 5'-phosphate as cofactor.

It is found in the cytoplasm. The catalysed reaction is (6R)-5,10-methylene-5,6,7,8-tetrahydrofolate + glycine + H2O = (6S)-5,6,7,8-tetrahydrofolate + L-serine. Its pathway is one-carbon metabolism; tetrahydrofolate interconversion. The protein operates within amino-acid biosynthesis; glycine biosynthesis; glycine from L-serine: step 1/1. Its function is as follows. Catalyzes the reversible interconversion of serine and glycine with tetrahydrofolate (THF) serving as the one-carbon carrier. This reaction serves as the major source of one-carbon groups required for the biosynthesis of purines, thymidylate, methionine, and other important biomolecules. Also exhibits THF-independent aldolase activity toward beta-hydroxyamino acids, producing glycine and aldehydes, via a retro-aldol mechanism. The polypeptide is Serine hydroxymethyltransferase (Geotalea uraniireducens (strain Rf4) (Geobacter uraniireducens)).